The chain runs to 500 residues: Protein farnesyltransferase subunit beta (500 aa).

Positions 117-140 are disordered; it reads LQNDDNNGNNNNRENNQNGGGFGG. A compositionally biased stretch (low complexity) spans 119-133; sequence NDDNNGNNNNRENNQ. PFTB repeat units lie at residues 121–162, 172–213, 220–261, 268–309, and 343–384; these read DNNG…YVIG, REAM…SMLN, ERGV…SILN, MNSL…IIIQ, and QEYV…SLSQ. Residues 246–249 and 288–291 each bind (2E,6E)-farnesyl diphosphate; these read HGGY and RTNK. Zn(2+) is bound by residues D294 and C296. 297 to 300 is a binding site for (2E,6E)-farnesyl diphosphate; that stretch reads YSYW. H372 serves as a coordination point for Zn(2+). Positions 402 to 451 are disordered; sequence FEQPSPPINKKSTNVFTISNNNNNNNNKNNNSDDNNNNSNNNNNNSENQL. Residues 420-449 show a composition bias toward low complexity; the sequence is SNNNNNNNNKNNNSDDNNNNSNNNNNNSEN.

It belongs to the protein prenyltransferase subunit beta family. As to quaternary structure, heterodimer of fntA and fntB (farnesyltransferase). Heterodimer of an alpha and a beta subunit. It depends on Zn(2+) as a cofactor.

The enzyme catalyses L-cysteinyl-[protein] + (2E,6E)-farnesyl diphosphate = S-(2E,6E)-farnesyl-L-cysteinyl-[protein] + diphosphate. Catalyzes the transfer of a farnesyl moiety from farnesyl diphosphate to a cysteine at the fourth position from the C-terminus of several proteins. The beta subunit is responsible for peptide-binding. The protein is Protein farnesyltransferase subunit beta (fntB) of Dictyostelium discoideum (Social amoeba).